We begin with the raw amino-acid sequence, 744 residues long: 5-methyltetrahydropteroyltriglutamate--homocysteine methyltransferase (744 aa).

5-methyltetrahydropteroyltri-L-glutamate-binding positions include 17–20 (REVK) and Lys110. Residues 422–424 (IGS) and Glu475 each bind L-homocysteine. Residues 422 to 424 (IGS) and Glu475 each bind L-methionine. Trp552 contributes to the 5-methyltetrahydropteroyltri-L-glutamate binding site. Asp590 serves as a coordination point for L-homocysteine. Asp590 contacts L-methionine. Glu596 provides a ligand contact to 5-methyltetrahydropteroyltri-L-glutamate. Zn(2+) contacts are provided by His632, Cys634, and Glu656. Residue His685 is the Proton donor of the active site. Residue Cys717 participates in Zn(2+) binding.

The protein belongs to the vitamin-B12 independent methionine synthase family. It depends on Zn(2+) as a cofactor.

The catalysed reaction is 5-methyltetrahydropteroyltri-L-glutamate + L-homocysteine = tetrahydropteroyltri-L-glutamate + L-methionine. It functions in the pathway amino-acid biosynthesis; L-methionine biosynthesis via de novo pathway; L-methionine from L-homocysteine (MetE route): step 1/1. Functionally, catalyzes the transfer of a methyl group from 5-methyltetrahydrofolate to homocysteine resulting in methionine formation. The sequence is that of 5-methyltetrahydropteroyltriglutamate--homocysteine methyltransferase from Trichodesmium erythraeum (strain IMS101).